Reading from the N-terminus, the 72-residue chain is Exodeoxyribonuclease 7 small subunit (72 aa).

Belongs to the XseB family. In terms of assembly, heterooligomer composed of large and small subunits.

The protein resides in the cytoplasm. The enzyme catalyses Exonucleolytic cleavage in either 5'- to 3'- or 3'- to 5'-direction to yield nucleoside 5'-phosphates.. Functionally, bidirectionally degrades single-stranded DNA into large acid-insoluble oligonucleotides, which are then degraded further into small acid-soluble oligonucleotides. This Chlamydia trachomatis serovar D (strain ATCC VR-885 / DSM 19411 / UW-3/Cx) protein is Exodeoxyribonuclease 7 small subunit.